The primary structure comprises 231 residues: Cytochrome c oxidase subunit 2 (231 aa).

The Mitochondrial intermembrane segment spans residues 1-30 (MNNFFQGYNLLFQHSLFASYMDWFHAFNCS). A helical transmembrane segment spans residues 31-51 (LLLGVLVFVTLLFGYLIFSTF). Over 52 to 64 (YFKSKKIEYQFGE) the chain is Mitochondrial matrix. The helical transmembrane segment at 65 to 85 (LLCSIFPTIILLMQMVPSLSL) threads the bilayer. Over 86–231 (LYYYGLMNLD…FKSWCFGTME (146 aa)) the chain is Mitochondrial intermembrane. Cu cation is bound by residues H164, C199, E201, C203, H207, and M210. E201 is a Mg(2+) binding site.

This sequence belongs to the cytochrome c oxidase subunit 2 family. As to quaternary structure, component of the cytochrome c oxidase (complex IV, CIV), a multisubunit enzyme composed of a catalytic core of 3 subunits and several supernumerary subunits. The complex exists as a monomer or a dimer and forms supercomplexes (SCs) in the inner mitochondrial membrane with ubiquinol-cytochrome c oxidoreductase (cytochrome b-c1 complex, complex III, CIII). The cofactor is Cu cation.

It is found in the mitochondrion inner membrane. It carries out the reaction 4 Fe(II)-[cytochrome c] + O2 + 8 H(+)(in) = 4 Fe(III)-[cytochrome c] + 2 H2O + 4 H(+)(out). In terms of biological role, component of the cytochrome c oxidase, the last enzyme in the mitochondrial electron transport chain which drives oxidative phosphorylation. The respiratory chain contains 3 multisubunit complexes succinate dehydrogenase (complex II, CII), ubiquinol-cytochrome c oxidoreductase (cytochrome b-c1 complex, complex III, CIII) and cytochrome c oxidase (complex IV, CIV), that cooperate to transfer electrons derived from NADH and succinate to molecular oxygen, creating an electrochemical gradient over the inner membrane that drives transmembrane transport and the ATP synthase. Cytochrome c oxidase is the component of the respiratory chain that catalyzes the reduction of oxygen to water. Electrons originating from reduced cytochrome c in the intermembrane space (IMS) are transferred via the dinuclear copper A center (CU(A)) of subunit 2 and heme A of subunit 1 to the active site in subunit 1, a binuclear center (BNC) formed by heme A3 and copper B (CU(B)). The BNC reduces molecular oxygen to 2 water molecules using 4 electrons from cytochrome c in the IMS and 4 protons from the mitochondrial matrix. This chain is Cytochrome c oxidase subunit 2 (cox-2), found in Caenorhabditis briggsae.